The primary structure comprises 324 residues: tRNA dimethylallyltransferase (324 aa).

Residue 17–24 (GPTASGKT) coordinates ATP. 19 to 24 (TASGKT) contributes to the substrate binding site. Interaction with substrate tRNA stretches follow at residues 42 to 45 (DSAL), 166 to 170 (QRIQR), and 251 to 256 (RCVGYR).

Belongs to the IPP transferase family. In terms of assembly, monomer. Requires Mg(2+) as cofactor.

It catalyses the reaction adenosine(37) in tRNA + dimethylallyl diphosphate = N(6)-dimethylallyladenosine(37) in tRNA + diphosphate. Functionally, catalyzes the transfer of a dimethylallyl group onto the adenine at position 37 in tRNAs that read codons beginning with uridine, leading to the formation of N6-(dimethylallyl)adenosine (i(6)A). The polypeptide is tRNA dimethylallyltransferase (Burkholderia mallei (strain NCTC 10247)).